A 226-amino-acid polypeptide reads, in one-letter code: Enolase-phosphatase E1 (226 aa).

The protein belongs to the HAD-like hydrolase superfamily. MasA/MtnC family. Monomer. It depends on Mg(2+) as a cofactor.

It carries out the reaction 5-methylsulfanyl-2,3-dioxopentyl phosphate + H2O = 1,2-dihydroxy-5-(methylsulfanyl)pent-1-en-3-one + phosphate. It participates in amino-acid biosynthesis; L-methionine biosynthesis via salvage pathway; L-methionine from S-methyl-5-thio-alpha-D-ribose 1-phosphate: step 3/6. It functions in the pathway amino-acid biosynthesis; L-methionine biosynthesis via salvage pathway; L-methionine from S-methyl-5-thio-alpha-D-ribose 1-phosphate: step 4/6. In terms of biological role, bifunctional enzyme that catalyzes the enolization of 2,3-diketo-5-methylthiopentyl-1-phosphate (DK-MTP-1-P) into the intermediate 2-hydroxy-3-keto-5-methylthiopentenyl-1-phosphate (HK-MTPenyl-1-P), which is then dephosphorylated to form the acireductone 1,2-dihydroxy-3-keto-5-methylthiopentene (DHK-MTPene). The protein is Enolase-phosphatase E1 of Shewanella frigidimarina (strain NCIMB 400).